Here is a 413-residue protein sequence, read N- to C-terminus: Transmembrane protein 237B (413 aa).

Residues 1–162 (MDPEAKVSSS…EDDDVITDPQ (162 aa)) form a disordered region. Residues 112-122 (DLVSNGDTLDQ) show a composition bias toward polar residues. Helical transmembrane passes span 233 to 253 (VIGLFSHGFLAGYAVWNIIVV), 274 to 294 (LAYPAQSLLYLLLALSTVSAF), 312 to 332 (LSPVALASVFYFSALVLSLSQ), and 360 to 380 (ILYPWITVNLVVSLLVGLAWI).

This sequence belongs to the TMEM237 family.

Its subcellular location is the membrane. It is found in the cell projection. The protein resides in the cilium. Functionally, component of the transition zone in primary cilia. Required for ciliogenesis. In Danio rerio (Zebrafish), this protein is Transmembrane protein 237B (tmem237b).